The sequence spans 202 residues: Proteasome subunit beta 1 (202 aa).

Met-1 is a propeptide (removed in mature form; by autocatalysis). Catalysis depends on Thr-2, which acts as the Nucleophile.

It belongs to the peptidase T1B family. In terms of assembly, the 20S proteasome core is composed of 14 alpha and 14 beta subunits that assemble into four stacked heptameric rings, resulting in a barrel-shaped structure. The two inner rings, each composed of seven catalytic beta subunits, are sandwiched by two outer rings, each composed of seven alpha subunits. The catalytic chamber with the active sites is on the inside of the barrel. Has a gated structure, the ends of the cylinder being occluded by the N-termini of the alpha-subunits. Is capped at one or both ends by the proteasome regulatory ATPase, PAN.

The protein localises to the cytoplasm. It catalyses the reaction Cleavage of peptide bonds with very broad specificity.. The formation of the proteasomal ATPase PAN-20S proteasome complex, via the docking of the C-termini of PAN into the intersubunit pockets in the alpha-rings, triggers opening of the gate for substrate entry. Interconversion between the open-gate and close-gate conformations leads to a dynamic regulation of the 20S proteasome proteolysis activity. Functionally, component of the proteasome core, a large protease complex with broad specificity involved in protein degradation. The polypeptide is Proteasome subunit beta 1 (Pyrobaculum arsenaticum (strain DSM 13514 / JCM 11321 / PZ6)).